Reading from the N-terminus, the 132-residue chain is UPF0329 protein ECU07_0050/ECU09_2020 (132 aa).

The protein belongs to the UPF0329 family.

This is UPF0329 protein ECU07_0050/ECU09_2020 from Encephalitozoon cuniculi (strain GB-M1) (Microsporidian parasite).